The primary structure comprises 508 residues: Photosystem II CP47 reaction center protein (508 aa).

Helical transmembrane passes span 21 to 36, 101 to 115, 140 to 156, 203 to 218, 237 to 252, and 457 to 472; these read AVHI…WAGS, IVFS…IWHW, GIHL…FGAF, IAAG…FHLS, VLSS…AFVV, and TFAL…HGAR.

This sequence belongs to the PsbB/PsbC family. PsbB subfamily. PSII is composed of 1 copy each of membrane proteins PsbA, PsbB, PsbC, PsbD, PsbE, PsbF, PsbH, PsbI, PsbJ, PsbK, PsbL, PsbM, PsbT, PsbX, PsbY, PsbZ, Psb30/Ycf12, at least 3 peripheral proteins of the oxygen-evolving complex and a large number of cofactors. It forms dimeric complexes. Binds multiple chlorophylls. PSII binds additional chlorophylls, carotenoids and specific lipids. serves as cofactor.

It is found in the plastid. The protein localises to the chloroplast thylakoid membrane. In terms of biological role, one of the components of the core complex of photosystem II (PSII). It binds chlorophyll and helps catalyze the primary light-induced photochemical processes of PSII. PSII is a light-driven water:plastoquinone oxidoreductase, using light energy to abstract electrons from H(2)O, generating O(2) and a proton gradient subsequently used for ATP formation. The protein is Photosystem II CP47 reaction center protein of Hordeum vulgare (Barley).